A 204-amino-acid chain; its full sequence is Ribosome maturation factor RimP (204 aa).

The protein belongs to the RimP family.

The protein resides in the cytoplasm. In terms of biological role, required for maturation of 30S ribosomal subunits. The polypeptide is Ribosome maturation factor RimP (Albidiferax ferrireducens (strain ATCC BAA-621 / DSM 15236 / T118) (Rhodoferax ferrireducens)).